Reading from the N-terminus, the 84-residue chain is Envelope glycoprotein N (84 aa).

The N-terminal stretch at 1 to 26 is a signal peptide; sequence MSCKKSARQSLYVSLCLFYILVFAAA. Residues 27 to 47 lie on the Virion surface side of the membrane; sequence TEVDFYSPECHSHTYEIVLNS. A helical membrane pass occupies residues 48 to 68; it reads FSSIWLLINLFLLLCSFAIFL. The Intravirion portion of the chain corresponds to 69–84; the sequence is KYWCYKTFASETVKGY.

This sequence belongs to the herpesviridae glycoprotein N family. Interacts (via N-terminus) with gM (via N-terminus). The gM-gN heterodimer forms the gCII complex.

The protein resides in the virion membrane. It is found in the host membrane. Its subcellular location is the host Golgi apparatus. The protein localises to the host trans-Golgi network. In terms of biological role, envelope glycoprotein necessary for proper maturation of gM and modulation of its membrane fusion activity. Also plays a critical role in virion morphogenesis. In Homo sapiens (Human), this protein is Envelope glycoprotein N.